The chain runs to 278 residues: ADP-dependent (S)-NAD(P)H-hydrate dehydratase (278 aa).

A YjeF C-terminal domain is found at 4–276 (DDDLVRQVIR…KAIPSWMKKL (273 aa)). The (6S)-NADPHX site is built by A39, G102, and H152. G216 provides a ligand contact to AMP. D217 serves as a coordination point for (6S)-NADPHX.

This sequence belongs to the NnrD/CARKD family. In terms of assembly, homotetramer. It depends on Mg(2+) as a cofactor.

The catalysed reaction is (6S)-NADHX + ADP = AMP + phosphate + NADH + H(+). It carries out the reaction (6S)-NADPHX + ADP = AMP + phosphate + NADPH + H(+). Catalyzes the dehydration of the S-form of NAD(P)HX at the expense of ADP, which is converted to AMP. Together with NAD(P)HX epimerase, which catalyzes the epimerization of the S- and R-forms, the enzyme allows the repair of both epimers of NAD(P)HX, a damaged form of NAD(P)H that is a result of enzymatic or heat-dependent hydration. In Streptococcus thermophilus, this protein is ADP-dependent (S)-NAD(P)H-hydrate dehydratase.